The primary structure comprises 262 residues: Ribose-5-phosphate isomerase A (262 aa).

Substrate-binding positions include 33–36, 89–92, and 102–105; these read TGST, DGAD, and KGGG. Residue E111 is the Proton acceptor of the active site. Position 129 (K129) interacts with substrate.

Belongs to the ribose 5-phosphate isomerase family. As to quaternary structure, homodimer.

It carries out the reaction aldehydo-D-ribose 5-phosphate = D-ribulose 5-phosphate. The protein operates within carbohydrate degradation; pentose phosphate pathway; D-ribose 5-phosphate from D-ribulose 5-phosphate (non-oxidative stage): step 1/1. In terms of biological role, catalyzes the reversible conversion of ribose-5-phosphate to ribulose 5-phosphate. The sequence is that of Ribose-5-phosphate isomerase A from Ruegeria pomeroyi (strain ATCC 700808 / DSM 15171 / DSS-3) (Silicibacter pomeroyi).